The chain runs to 354 residues: DNA polymerase IV (354 aa).

In terms of domain architecture, UmuC spans 6-187 (IIHVDCDCFY…LPVARLHGVG (182 aa)). Residues Asp-10 and Asp-105 each coordinate Mg(2+). Glu-106 is a catalytic residue.

Belongs to the DNA polymerase type-Y family. As to quaternary structure, monomer. Mg(2+) serves as cofactor.

The protein resides in the cytoplasm. It catalyses the reaction DNA(n) + a 2'-deoxyribonucleoside 5'-triphosphate = DNA(n+1) + diphosphate. Functionally, poorly processive, error-prone DNA polymerase involved in untargeted mutagenesis. Copies undamaged DNA at stalled replication forks, which arise in vivo from mismatched or misaligned primer ends. These misaligned primers can be extended by PolIV. Exhibits no 3'-5' exonuclease (proofreading) activity. May be involved in translesional synthesis, in conjunction with the beta clamp from PolIII. This is DNA polymerase IV from Pseudomonas putida (strain ATCC 47054 / DSM 6125 / CFBP 8728 / NCIMB 11950 / KT2440).